A 149-amino-acid polypeptide reads, in one-letter code: L-alanine exporter AlaE (149 aa).

Transmembrane regions (helical) follow at residues 16–36 (FAMVVYCSVVNMLIEIFLSGM), 46–66 (LVAIPVNILIAWPYGVYRDLI), 83–105 (ADVLAYVTFQSPVYIIILLTVGA), and 115–135 (SSNIVVSMLMGAVYGYFLDYC).

Belongs to the AlaE exporter family.

The protein localises to the cell inner membrane. Exports L-alanine. This is L-alanine exporter AlaE from Salmonella typhimurium (strain LT2 / SGSC1412 / ATCC 700720).